Here is a 254-residue protein sequence, read N- to C-terminus: 2-dehydro-3-deoxy-D-gluconate 5-dehydrogenase (254 aa).

16–40 (LVTGPGTGIGQGIAKALAGAGADII) lines the NAD(+) pocket. Residue serine 146 coordinates substrate. Catalysis depends on tyrosine 159, which acts as the Proton acceptor.

The protein belongs to the short-chain dehydrogenases/reductases (SDR) family.

The catalysed reaction is 2-dehydro-3-deoxy-D-gluconate + NAD(+) = 3-deoxy-D-glycero-2,5-hexodiulosonate + NADH + H(+). Its pathway is glycan metabolism; pectin degradation; 2-dehydro-3-deoxy-D-gluconate from pectin: step 5/5. In terms of biological role, catalyzes the reduction of 2,5-diketo-3-deoxygluconate (DKII or 4,6-dihydroxy-2,5-dioxohexanoate) into 2-keto-3-deoxygluconate (KDG or 2-dehydro-3-deoxygluconate) with a concomitant oxidation of NADH. This chain is 2-dehydro-3-deoxy-D-gluconate 5-dehydrogenase (kduD), found in Bacillus subtilis (strain 168).